We begin with the raw amino-acid sequence, 178 residues long: MEQFHGTTIVSVRRGDKVALGGDGQVTLGNIVMKGGARKVRRIYNNQVLVGFAGGTADAFSLLDRFEAKLEKHQGNLTRAAVELAKDWRTDRMLRRLEAMLITADATTTLVITGNGDVLDPEGGICAIGSGGAYAQAAARALVENTDLSPRDIVEKSLGIAGDMCIYTNHNRIIETIE.

Residue threonine 7 is part of the active site. Glycine 162, cysteine 165, and threonine 168 together coordinate Na(+).

It belongs to the peptidase T1B family. HslV subfamily. In terms of assembly, a double ring-shaped homohexamer of HslV is capped on each side by a ring-shaped HslU homohexamer. The assembly of the HslU/HslV complex is dependent on binding of ATP.

It localises to the cytoplasm. It carries out the reaction ATP-dependent cleavage of peptide bonds with broad specificity.. Allosterically activated by HslU binding. Its function is as follows. Protease subunit of a proteasome-like degradation complex believed to be a general protein degrading machinery. The sequence is that of ATP-dependent protease subunit HslV from Burkholderia orbicola (strain AU 1054).